The following is a 594-amino-acid chain: UvrABC system protein C (594 aa).

Residues 14–91 (DQPGCYLMKD…IKKHDPKYNI (78 aa)) form the GIY-YIG domain. The 36-residue stretch at 196 to 231 (KEVRSELETKMYEASEKLEFERAKELRDQIAHIDAI) folds into the UVR domain.

This sequence belongs to the UvrC family. Interacts with UvrB in an incision complex.

The protein resides in the cytoplasm. Functionally, the UvrABC repair system catalyzes the recognition and processing of DNA lesions. UvrC both incises the 5' and 3' sides of the lesion. The N-terminal half is responsible for the 3' incision and the C-terminal half is responsible for the 5' incision. In Bacillus anthracis (strain A0248), this protein is UvrABC system protein C.